The primary structure comprises 663 residues: Probable receptor-like protein kinase At1g49730 (663 aa).

An N-terminal signal peptide occupies residues 1–25 (MVVNSQAFLLALIALLATQLPSLMA). Residues 26–254 (ADCPLDFSGS…TNPYHLTMVP (229 aa)) lie on the Extracellular side of the membrane. N-linked (GlcNAc...) asparagine glycans are attached at residues N36, N46, N70, N101, and N171. A disordered region spans residues 213–243 (SFSPVASPEPSPSTVGGISPSNSDSQMTTSR). Polar residues predominate over residues 224-243 (PSTVGGISPSNSDSQMTTSR). A helical membrane pass occupies residues 255-275 (TIGIVVTAVALTMLVVLVILI). The Cytoplasmic portion of the chain corresponds to 276–663 (RRKNRELDES…PHSPINGFSF (388 aa)). The region spanning 327–609 (NDFNTVIGQG…ESCDPVHSAF (283 aa)) is the Protein kinase domain. ATP contacts are provided by residues 333–341 (IGQGGFGTV) and K355. Catalysis depends on D451, which acts as the Proton acceptor. Positions 631 to 663 (RGDSRIFGPSSSTTSRSHYSRSLPHSPINGFSF) are disordered. Low complexity predominate over residues 640–652 (SSSTTSRSHYSRS).

The protein belongs to the protein kinase superfamily. Ser/Thr protein kinase family.

Its subcellular location is the cell membrane. The enzyme catalyses L-seryl-[protein] + ATP = O-phospho-L-seryl-[protein] + ADP + H(+). It catalyses the reaction L-threonyl-[protein] + ATP = O-phospho-L-threonyl-[protein] + ADP + H(+). The sequence is that of Probable receptor-like protein kinase At1g49730 from Arabidopsis thaliana (Mouse-ear cress).